A 142-amino-acid chain; its full sequence is Universal stress protein D (142 aa).

This sequence belongs to the universal stress protein A family.

Its subcellular location is the cytoplasm. In terms of biological role, required for resistance to DNA-damaging agents. This is Universal stress protein D (uspD) from Escherichia coli (strain K12).